The primary structure comprises 304 residues: MGLDSPDMRPELSQYKHLSAGKVREIYEIDEHHILMVASDRISAYDFILDTEIPDKGRVLTAMSQFFFDAIDFPNHLAGPIDDPRIPEEVLGRAMVCKKLAMMPFECVVRGYLTGSGLEEYRQTGTVCGITLPEGLVESSRLPEPIFTPATKADVGDHDINVSFDVVEERLGEARANQLRDASIAIYSRAAEIALERGVILADTKFEFGLDENGELVLGDEVLTPDSSRYWPAEGYEAGHVQPSFDKQYVRNWLTGPKSGWDKNSGVQPPALPGSVVEATRERYIEAYELISGNKFSTWIGCCV.

Belongs to the SAICAR synthetase family.

It catalyses the reaction 5-amino-1-(5-phospho-D-ribosyl)imidazole-4-carboxylate + L-aspartate + ATP = (2S)-2-[5-amino-1-(5-phospho-beta-D-ribosyl)imidazole-4-carboxamido]succinate + ADP + phosphate + 2 H(+). Its pathway is purine metabolism; IMP biosynthesis via de novo pathway; 5-amino-1-(5-phospho-D-ribosyl)imidazole-4-carboxamide from 5-amino-1-(5-phospho-D-ribosyl)imidazole-4-carboxylate: step 1/2. This chain is Phosphoribosylaminoimidazole-succinocarboxamide synthase, found in Corynebacterium efficiens (strain DSM 44549 / YS-314 / AJ 12310 / JCM 11189 / NBRC 100395).